Reading from the N-terminus, the 81-residue chain is Toxin-like peptide AaF1CA5 (81 aa).

The first 22 residues, 1–22 (MMKLMLFSIIVILFSLIGSIHG), serve as a signal peptide directing secretion. An LCN-type CS-alpha/beta domain is found at 25–81 (VPGNYPLDSSDDTYLCAPLGENPFCIKICRKHGVKYGLMLRLPCWCEYFGKIKNVKI). 2 disulfides stabilise this stretch: Cys-49-Cys-68 and Cys-53-Cys-70.

Belongs to the long (3 C-C) scorpion toxin superfamily. Expressed by the venom gland.

It localises to the secreted. Functionally, probable neurotoxin that inhibits ion channels. The chain is Toxin-like peptide AaF1CA5 from Androctonus australis (Sahara scorpion).